Consider the following 489-residue polypeptide: Rhamnulokinase (489 aa).

13–17 contributes to the ATP binding site; the sequence is ASSGR. Cys-68 and Cys-222 are joined by a disulfide. Residues Gly-83 and 236–238 each bind substrate; that span reads HDT. Asp-237 (proton acceptor) is an active-site residue. An ATP-binding site is contributed by Thr-259. A substrate-binding site is contributed by Asn-296. Residue Gln-304 participates in ATP binding. An intrachain disulfide couples Cys-353 to Cys-370. Gly-402 is an ATP binding site. A disulfide bond links Cys-413 and Cys-417.

It belongs to the rhamnulokinase family. In terms of assembly, monomer. It depends on Mg(2+) as a cofactor.

The catalysed reaction is L-rhamnulose + ATP = L-rhamnulose 1-phosphate + ADP + H(+). The protein operates within carbohydrate degradation; L-rhamnose degradation; glycerone phosphate from L-rhamnose: step 2/3. In terms of biological role, involved in the catabolism of L-rhamnose (6-deoxy-L-mannose). Catalyzes the transfer of the gamma-phosphate group from ATP to the 1-hydroxyl group of L-rhamnulose to yield L-rhamnulose 1-phosphate. The chain is Rhamnulokinase from Escherichia coli (strain SE11).